The following is a 188-amino-acid chain: Elongation factor P-like protein (188 aa).

Belongs to the elongation factor P family.

This is Elongation factor P-like protein from Vibrio cholerae serotype O1 (strain ATCC 39541 / Classical Ogawa 395 / O395).